A 169-amino-acid chain; its full sequence is Peptide methionine sulfoxide reductase MsrA (169 aa).

The active site involves Cys-10.

It belongs to the MsrA Met sulfoxide reductase family.

It carries out the reaction L-methionyl-[protein] + [thioredoxin]-disulfide + H2O = L-methionyl-(S)-S-oxide-[protein] + [thioredoxin]-dithiol. The catalysed reaction is [thioredoxin]-disulfide + L-methionine + H2O = L-methionine (S)-S-oxide + [thioredoxin]-dithiol. Its function is as follows. Has an important function as a repair enzyme for proteins that have been inactivated by oxidation. Catalyzes the reversible oxidation-reduction of methionine sulfoxide in proteins to methionine. The sequence is that of Peptide methionine sulfoxide reductase MsrA from Streptococcus agalactiae serotype III (strain NEM316).